A 98-amino-acid chain; its full sequence is Large ribosomal subunit protein uL23 (98 aa).

This sequence belongs to the universal ribosomal protein uL23 family. In terms of assembly, part of the 50S ribosomal subunit. Contacts protein L29, and trigger factor when it is bound to the ribosome.

In terms of biological role, one of the early assembly proteins it binds 23S rRNA. One of the proteins that surrounds the polypeptide exit tunnel on the outside of the ribosome. Forms the main docking site for trigger factor binding to the ribosome. The sequence is that of Large ribosomal subunit protein uL23 from Hahella chejuensis (strain KCTC 2396).